The following is a 235-amino-acid chain: Probable septum site-determining protein MinC (235 aa).

The disordered stretch occupies residues 104–125 (KAVRPAPVEPATPSEPPQNANP). Over residues 110 to 119 (PVEPATPSEP) the composition is skewed to pro residues.

Belongs to the MinC family. In terms of assembly, interacts with MinD and FtsZ.

Functionally, cell division inhibitor that blocks the formation of polar Z ring septums. Rapidly oscillates between the poles of the cell to destabilize FtsZ filaments that have formed before they mature into polar Z rings. Prevents FtsZ polymerization. The chain is Probable septum site-determining protein MinC from Salmonella agona (strain SL483).